A 508-amino-acid chain; its full sequence is DNA-directed RNA polymerase subunit Rpo1C (508 aa).

The segment at 1 to 123 (MIIWKDTAKN…REKYEYEKKV (123 aa)) is unknown. Residues 124–508 (SSQVLDVIAE…IYKGYPKTKK (385 aa)) are DNA-directed RNA polymerase subunit Rpo1C.

Belongs to the RNA polymerase beta' chain family. In terms of assembly, part of the RNA polymerase complex.

The protein localises to the cytoplasm. It catalyses the reaction RNA(n) + a ribonucleoside 5'-triphosphate = RNA(n+1) + diphosphate. In terms of biological role, DNA-dependent RNA polymerase (RNAP) catalyzes the transcription of DNA into RNA using the four ribonucleoside triphosphates as substrates. Forms part of the jaw domain. This Thermoplasma volcanium (strain ATCC 51530 / DSM 4299 / JCM 9571 / NBRC 15438 / GSS1) protein is DNA-directed RNA polymerase subunit Rpo1C.